Reading from the N-terminus, the 331-residue chain is DNA-directed RNA polymerase subunit alpha (331 aa).

The segment at 1 to 246 is alpha N-terminal domain (alpha-NTD); sequence MMQTSRTLHN…GLFSPLQEVS (246 aa). The tract at residues 256 to 331 is alpha C-terminal domain (alpha-CTD); sequence AEDNQKNQIP…LTLPRERSKT (76 aa).

This sequence belongs to the RNA polymerase alpha chain family. As to quaternary structure, in cyanobacteria the RNAP catalytic core is composed of 2 alpha, 1 beta, 1 beta', 1 gamma and 1 omega subunit. When a sigma factor is associated with the core the holoenzyme is formed, which can initiate transcription.

It carries out the reaction RNA(n) + a ribonucleoside 5'-triphosphate = RNA(n+1) + diphosphate. DNA-dependent RNA polymerase catalyzes the transcription of DNA into RNA using the four ribonucleoside triphosphates as substrates. The sequence is that of DNA-directed RNA polymerase subunit alpha from Synechococcus sp. (strain JA-3-3Ab) (Cyanobacteria bacterium Yellowstone A-Prime).